The chain runs to 637 residues: MVSLDTEVVNDLKSKVNIADLISQYVALSRTGKNYIGLCPFHGEKTPSFNVNAEKGFYHCFGCGRSGDAIEFLKEYNQVGFVDAVKELADFAGVTLNISDDREEKNNPNAPLFEINNQAARLYNILLMSTELGERARKYLEERGITDDVIKRFNIGLAPEENDFIFKNLSNKFDEEIMAKSGLFHFSNNNVFDAFTNRIMFPITNEYGHTIGFSGRKWQENDDSKAKYINTSATTIFDKSYELWNLDKAKPTISKQHEVYLMEGFMDVIAAYKAGINNVVASMGTALTEKHIRRLKQMAKKFVLVYDGDSAGQNAIYKAIDLIGESAVQIVKVPEGLDPDEYSKNYGLKGLSALMETGRIQPIEFLIDYLRPENLANLQTQLDFIEQISPMIAKLPSITAQDAYIRKLVEILPDFEYNQVEQAVNLRRENMTITDHPVSNLDASSLTESFTDENDYSSLESVMPVDFEEAYYENNVKTQQTYRRSESAQVVQPSVQVPKLSRSEKAEEMLLHRMIYHSSVLKKFSQDENFRFVHKRYQDLFDKILLEAMVYEQIDESHLASELSDEERSLFYQIISLDLPDTASSQEIKDLVSIFSNEMEQIKFEELIQQLATAEKAGNKERVLELTLQIINQKKKL.

The segment at 39–63 adopts a CHC2-type zinc-finger fold; it reads CPFHGEKTPSFNVNAEKGFYHCFGC. Positions 257–338 constitute a Toprim domain; sequence HEVYLMEGFM…QIVKVPEGLD (82 aa). Residues Glu-263, Asp-307, and Asp-309 each coordinate Mg(2+).

Belongs to the DnaG primase family. Monomer. Interacts with DnaB. It depends on Zn(2+) as a cofactor. Mg(2+) serves as cofactor.

The catalysed reaction is ssDNA + n NTP = ssDNA/pppN(pN)n-1 hybrid + (n-1) diphosphate.. In terms of biological role, RNA polymerase that catalyzes the synthesis of short RNA molecules used as primers for DNA polymerase during DNA replication. The sequence is that of DNA primase from Lactococcus lactis subsp. lactis (strain IL1403) (Streptococcus lactis).